A 355-amino-acid chain; its full sequence is D-alanine--D-alanine ligase (355 aa).

The 208-residue stretch at 143–350 folds into the ATP-grasp domain; that stretch reads KQIFSNLSIP…IDQLVAKLID (208 aa). 178 to 233 provides a ligand contact to ATP; the sequence is IEKLNLPVFVKPANSGSSLGISKAKNKSEIIKALQKAWEIDSRIVIEEGLNVRELE. Mg(2+)-binding residues include aspartate 303, glutamate 317, and asparagine 319.

The protein belongs to the D-alanine--D-alanine ligase family. The cofactor is Mg(2+). Mn(2+) is required as a cofactor.

Its subcellular location is the cytoplasm. It catalyses the reaction 2 D-alanine + ATP = D-alanyl-D-alanine + ADP + phosphate + H(+). It functions in the pathway cell wall biogenesis; peptidoglycan biosynthesis. In terms of biological role, cell wall formation. The sequence is that of D-alanine--D-alanine ligase from Prochlorococcus marinus (strain MIT 9515).